The primary structure comprises 593 residues: DNA primase (593 aa).

The CHC2-type zinc-finger motif lies at 40 to 64 (CPFHHEKTPSFTVSQKKQFYHCFGC). Residues 260–342 (KQLLVVEGYM…GRQLKFIFLP (83 aa)) form the Toprim domain. The Mg(2+) site is built by Glu-266, Asp-310, and Asp-312.

This sequence belongs to the DnaG primase family. In terms of assembly, monomer. Interacts with DnaB. Zn(2+) serves as cofactor. The cofactor is Mg(2+).

It catalyses the reaction ssDNA + n NTP = ssDNA/pppN(pN)n-1 hybrid + (n-1) diphosphate.. Its function is as follows. RNA polymerase that catalyzes the synthesis of short RNA molecules used as primers for DNA polymerase during DNA replication. The protein is DNA primase of Haemophilus influenzae (strain ATCC 51907 / DSM 11121 / KW20 / Rd).